The chain runs to 158 residues: MQGRLSVWLVKHGLVHRSLGFDYQGIETLQIKPEDWHSIAVILYVYGYNYLRSQCAYDVAPGGLLASVYHLTRIEYGVDQPEEVCIKVFAPRSNPRIPSVFWVWKSSDFQERESYDMLGISYENHPRLKRILMPESWIGWPLRKDYIAPNFYEIQDAH.

This sequence belongs to the complex I 30 kDa subunit family. NDH is composed of at least 16 different subunits, 5 of which are encoded in the nucleus.

The protein localises to the plastid. The protein resides in the chloroplast thylakoid membrane. It carries out the reaction a plastoquinone + NADH + (n+1) H(+)(in) = a plastoquinol + NAD(+) + n H(+)(out). It catalyses the reaction a plastoquinone + NADPH + (n+1) H(+)(in) = a plastoquinol + NADP(+) + n H(+)(out). In terms of biological role, NDH shuttles electrons from NAD(P)H:plastoquinone, via FMN and iron-sulfur (Fe-S) centers, to quinones in the photosynthetic chain and possibly in a chloroplast respiratory chain. The immediate electron acceptor for the enzyme in this species is believed to be plastoquinone. Couples the redox reaction to proton translocation, and thus conserves the redox energy in a proton gradient. The polypeptide is NAD(P)H-quinone oxidoreductase subunit J, chloroplastic (Gossypium barbadense (Sea Island cotton)).